Reading from the N-terminus, the 552-residue chain is Non-structural protein NS1 (552 aa).

The polypeptide is Non-structural protein NS1 (Segment-5) (Bluetongue virus 1 (isolate South Africa) (BTV 1)).